Here is a 749-residue protein sequence, read N- to C-terminus: Catalase-peroxidase 2 (749 aa).

A signal peptide spans 1–27; sequence MFKRTIPLFAAFTLAISPSVFPNYAYA. The tryptophyl-tyrosyl-methioninium (Trp-Tyr) (with M-255) cross-link spans 107–229; the sequence is WHAAGTYRIY…LAATVMGLIY (123 aa). H108 serves as the catalytic Proton acceptor. Residues 229-255 constitute a cross-link (tryptophyl-tyrosyl-methioninium (Tyr-Met) (with W-107)); sequence YVNPEGPNGVPDPLAAAEKIRETFGRM. H270 is a heme b binding site.

This sequence belongs to the peroxidase family. Peroxidase/catalase subfamily. Homodimer or homotetramer. Heme b is required as a cofactor. Post-translationally, formation of the three residue Trp-Tyr-Met cross-link is important for the catalase, but not the peroxidase activity of the enzyme.

The catalysed reaction is H2O2 + AH2 = A + 2 H2O. The enzyme catalyses 2 H2O2 = O2 + 2 H2O. In terms of biological role, bifunctional enzyme with both catalase and broad-spectrum peroxidase activity. In Legionella pneumophila (strain Paris), this protein is Catalase-peroxidase 2.